The primary structure comprises 71 residues: Translation initiation factor IF-1 (71 aa).

In terms of domain architecture, S1-like spans 1 to 71; the sequence is MSKQEMLSFS…LTKGRITFRG (71 aa).

This sequence belongs to the IF-1 family. As to quaternary structure, component of the 30S ribosomal translation pre-initiation complex which assembles on the 30S ribosome in the order IF-2 and IF-3, IF-1 and N-formylmethionyl-tRNA(fMet); mRNA recruitment can occur at any time during PIC assembly.

It is found in the cytoplasm. In terms of biological role, one of the essential components for the initiation of protein synthesis. Stabilizes the binding of IF-2 and IF-3 on the 30S subunit to which N-formylmethionyl-tRNA(fMet) subsequently binds. Helps modulate mRNA selection, yielding the 30S pre-initiation complex (PIC). Upon addition of the 50S ribosomal subunit IF-1, IF-2 and IF-3 are released leaving the mature 70S translation initiation complex. The sequence is that of Translation initiation factor IF-1 from Pelagibacter ubique (strain HTCC1062).